The chain runs to 341 residues: C2 calcium-dependent domain-containing protein 4D (341 aa).

Residues 56-71 (RLRDPRGAEGRVDRNP) are compositionally biased toward basic and acidic residues. 2 disordered regions span residues 56–75 (RLRD…GGRN) and 134–176 (CRAP…PYAP). A compositionally biased stretch (low complexity) spans 139–149 (SDTASSPDSSP). In terms of domain architecture, C2 spans 205 to 331 (RGGQLRLSTE…PPLAGGLGPG (127 aa)).

The polypeptide is C2 calcium-dependent domain-containing protein 4D (C2cd4d) (Mus musculus (Mouse)).